The primary structure comprises 304 residues: D-tagatose-1-phosphate kinase (304 aa).

Asp-250 serves as the catalytic Proton acceptor.

Belongs to the carbohydrate kinase PfkB family. Mg(2+) serves as cofactor.

The catalysed reaction is alpha-D-tagatopyranose 1-phosphate + ATP = D-tagatofuranose 1,6-bisphosphate + ADP + H(+). The protein operates within carbohydrate degradation. Activity is inhibited by tagatose-6-phosphate and fructose-6-phosphate. Functionally, kinase involved in a D-tagatose catabolic pathway. Catalyzes the phosphorylation of D-tagatose-1-phosphate (Tag-1P) to D-tagatose-1,6-bisphosphate. Can also use D-fructose-1-phosphate, with 40-fold lower catalytic efficiency, but not tagatose-6-phosphate or fructose-6-phosphate. The substrate, which occurs in a pyranose form in solution, may undergo a change to the furanose conformation after binding to the enzyme, in order to permit phosphorylation at C-6. The polypeptide is D-tagatose-1-phosphate kinase (Bacillus licheniformis (strain ATCC 14580 / DSM 13 / JCM 2505 / CCUG 7422 / NBRC 12200 / NCIMB 9375 / NCTC 10341 / NRRL NRS-1264 / Gibson 46)).